The following is a 323-amino-acid chain: Probable proline iminopeptidase (323 aa).

The AB hydrolase-1 domain occupies Val-37–Ala-301. Catalysis depends on Ser-114, which acts as the Nucleophile. Residue Asp-271 is part of the active site. The Proton donor role is filled by His-299.

This sequence belongs to the peptidase S33 family.

The protein localises to the cytoplasm. It catalyses the reaction Release of N-terminal proline from a peptide.. In terms of biological role, specifically catalyzes the removal of N-terminal proline residues from peptides. In Streptomyces coelicolor (strain ATCC BAA-471 / A3(2) / M145), this protein is Probable proline iminopeptidase.